Reading from the N-terminus, the 290-residue chain is D-tagatose-1,6-bisphosphate aldolase subunit KbaY (290 aa).

The active-site Proton donor is the Asp82. Zn(2+)-binding residues include His83 and His180. Residue Gly181 participates in dihydroxyacetone phosphate binding. Position 208 (His208) interacts with Zn(2+). Dihydroxyacetone phosphate-binding positions include 209–211 and 230–233; these read GAS and NVAT.

Belongs to the class II fructose-bisphosphate aldolase family. TagBP aldolase KbaY subfamily. Homotetramer. Forms a complex with KbaZ. Requires Zn(2+) as cofactor.

The enzyme catalyses D-tagatofuranose 1,6-bisphosphate = D-glyceraldehyde 3-phosphate + dihydroxyacetone phosphate. The protein operates within carbohydrate metabolism; D-tagatose 6-phosphate degradation; D-glyceraldehyde 3-phosphate and glycerone phosphate from D-tagatose 6-phosphate: step 2/2. In terms of biological role, catalytic subunit of the tagatose-1,6-bisphosphate aldolase KbaYZ, which catalyzes the reversible aldol condensation of dihydroxyacetone phosphate (DHAP or glycerone-phosphate) with glyceraldehyde 3-phosphate (G3P) to produce tagatose 1,6-bisphosphate (TBP). Requires KbaZ subunit for full activity and stability. The polypeptide is D-tagatose-1,6-bisphosphate aldolase subunit KbaY (Salmonella arizonae (strain ATCC BAA-731 / CDC346-86 / RSK2980)).